We begin with the raw amino-acid sequence, 172 residues long: Single-stranded DNA-binding protein A (172 aa).

The SSB domain maps to 1–104 (MLNRVVLVGR…VQAESVQFLE (104 aa)). Residue tyrosine 82 is modified to Phosphotyrosine. The disordered stretch occupies residues 103-172 (LEPKNGGGSG…IDISDDDLPF (70 aa)). The segment covering 107–131 (NGGGSGSGGYNEGNSGGGQYFGGGQ) has biased composition (gly residues). The span at 132 to 149 (NDNPFGGNQNNQRRNQGN) shows a compositional bias: low complexity. The Important for interaction with partner proteins signature appears at 167–172 (DDDLPF).

As to quaternary structure, homotetramer. Interacts with proteins involved in DNA metabolism such as PriA, RecQ, RecG, RecS, DnaE, RarA, RecJ, RecO, SbcC, RecD2 (formerly YrrC), XseA and Ung. Interacts with RecQ via its 10 C-terminal residues. Interacts with RecD2. Phosphorylated by YwqD, which increases ssDNA affinity; dephosphorylated by YwqE.

The protein localises to the cytoplasm. It is found in the nucleoid. In terms of biological role, plays an important role in DNA replication, recombination and repair. Binds to single-stranded (ss)DNA and to an array of partner proteins to recruit them to their sites of action during DNA metabolism. Associates with oriC, this requires DnaA. SsbA binding to ssDNA prevents DnaB and DnaD individually from binding to DNA. Has a 20-fold higher affinity for ssDNA than SsbB; SsbA and DprA activate the homologous DNA strand exchange function of RecA-ATP. Enhances the activity of 3'-5' DNA helicase RecQ. This chain is Single-stranded DNA-binding protein A (ssbA), found in Bacillus subtilis (strain 168).